Consider the following 1029-residue polypeptide: Pro-apoptotic serine protease NMA111 (1029 aa).

The interval 1-49 (MNGPTSQRAKRKQGSASSLDDRPPKHQRALNGAKQQSTGDNTPEEDMYD) is disordered. The segment at 84–274 (VVSIRFCQTC…LPLDRPLRAL (191 aa)) is serine protease. Catalysis depends on charge relay system residues histidine 122, aspartate 153, and serine 235. PDZ domains follow at residues 307 to 379 (PEWE…QRGG) and 845 to 958 (EFLG…VTFD). Residues 997–1029 (KAMEGEPSEGVPAVEEEAGGAVDDDVPMAAVEK) are disordered. Acidic residues predominate over residues 1010 to 1022 (VEEEAGGAVDDDV).

It belongs to the peptidase S1C family.

It is found in the nucleus. Functionally, nuclear serine protease which mediates apoptosis. The protein is Pro-apoptotic serine protease NMA111 (NMA111) of Pyricularia oryzae (strain 70-15 / ATCC MYA-4617 / FGSC 8958) (Rice blast fungus).